The sequence spans 496 residues: Cytosol aminopeptidase (496 aa).

2 residues coordinate Mn(2+): lysine 258 and aspartate 263. The active site involves lysine 270. Residues aspartate 281, aspartate 340, and glutamate 342 each coordinate Mn(2+). Arginine 344 is an active-site residue.

It belongs to the peptidase M17 family. Mn(2+) serves as cofactor.

Its subcellular location is the cytoplasm. The catalysed reaction is Release of an N-terminal amino acid, Xaa-|-Yaa-, in which Xaa is preferably Leu, but may be other amino acids including Pro although not Arg or Lys, and Yaa may be Pro. Amino acid amides and methyl esters are also readily hydrolyzed, but rates on arylamides are exceedingly low.. The enzyme catalyses Release of an N-terminal amino acid, preferentially leucine, but not glutamic or aspartic acids.. In terms of biological role, presumably involved in the processing and regular turnover of intracellular proteins. Catalyzes the removal of unsubstituted N-terminal amino acids from various peptides. The protein is Cytosol aminopeptidase (pepA) of Helicobacter pylori (strain J99 / ATCC 700824) (Campylobacter pylori J99).